A 161-amino-acid chain; its full sequence is Ribonuclease P protein component (161 aa).

This sequence belongs to the RnpA family. Consists of a catalytic RNA component (M1 or rnpB) and a protein subunit.

The catalysed reaction is Endonucleolytic cleavage of RNA, removing 5'-extranucleotides from tRNA precursor.. Its function is as follows. RNaseP catalyzes the removal of the 5'-leader sequence from pre-tRNA to produce the mature 5'-terminus. It can also cleave other RNA substrates such as 4.5S RNA. The protein component plays an auxiliary but essential role in vivo by binding to the 5'-leader sequence and broadening the substrate specificity of the ribozyme. This Helicobacter pylori (strain Shi470) protein is Ribonuclease P protein component.